Here is a 101-residue protein sequence, read N- to C-terminus: uncharacterized protein (101 aa).

It localises to the plastid. The protein localises to the chloroplast. This is an uncharacterized protein from Chlamydomonas reinhardtii (Chlamydomonas smithii).